The sequence spans 123 residues: MASLRIAPLALFFFLAASVMFTVEKTEAGIPCGESCVFIPCITAAIGCSCKSKVCYRNHVIAAEAKTMDDHHLLCQSHEDCITKGTGNFCAPFPDQDIKYGWCFRAESEGFLLKDHLKMSITN.

An N-terminal signal peptide occupies residues M1 to A28. The cyclopeptide (Gly-Asn) cross-link spans G29–N58. Disulfide bonds link C32/C48, C36/C50, and C41/C55. A propeptide spans H59–N123 (removed in mature form).

Contains 3 disulfide bonds. Post-translationally, this is a cyclic peptide. In terms of tissue distribution, expressed in flower, stem, shoot, root, leaf, seed, pod and nodule (at protein level).

Its function is as follows. Probably participates in a plant defense mechanism. Active against Gram-negative bacteria E.coli ATCC 700926 (MIC=1.0 uM), K.pneumoniae ATTC 13883 (MIC=5.5 uM) and P.aeruginosa ATCC 39018 (MIC=7.5 uM). Has hemolytic and cytotoxic activity. The polypeptide is Cliotide T4 (Clitoria ternatea (Butterfly pea)).